A 276-amino-acid polypeptide reads, in one-letter code: Glutamate 5-kinase (276 aa).

Lysine 14 provides a ligand contact to ATP. Positions 54, 141, and 157 each coordinate substrate. ATP-binding positions include 177-178 and 219-225; these read SD and TGGMLTK.

The protein belongs to the glutamate 5-kinase family.

It localises to the cytoplasm. It carries out the reaction L-glutamate + ATP = L-glutamyl 5-phosphate + ADP. Its pathway is amino-acid biosynthesis; L-proline biosynthesis; L-glutamate 5-semialdehyde from L-glutamate: step 1/2. Its function is as follows. Catalyzes the transfer of a phosphate group to glutamate to form L-glutamate 5-phosphate. This chain is Glutamate 5-kinase, found in Listeria monocytogenes serotype 4b (strain CLIP80459).